The following is a 742-amino-acid chain: Phosphatidylinositol 4-phosphate 5-kinase its3 (742 aa).

2 disordered regions span residues 1–21 and 82–228; these read MKID…IPSY and LFKE…PDIG. Composition is skewed to low complexity over residues 90–105 and 129–142; these read PSNP…SNDS and PSSN…LQNL. Polar residues-rich tracts occupy residues 158-181 and 193-218; these read RSSS…SSSQ and EKNS…TSGS. Residues 264–662 form the PIPK domain; that stretch reads GHENYVTAYN…RFYKFVESSI (399 aa). Residues 677–742 are disordered; the sequence is QDGQRVNKQQ…RNVTTNTSSS (66 aa). A compositionally biased stretch (polar residues) spans 680 to 719; sequence QRVNKQQSVNAGNVRTNNKHGSLNNNTAPSSRNAKSTSAH.

In terms of assembly, interacts with opy1 (via domain PH 1); the interaction is direct but opy1 does not appear to regulate its3 localization or function. Post-translationally, phosphorylated by casein kinase I. Phosphorylation inactivates the enzyme.

It localises to the cell membrane. It carries out the reaction a 1,2-diacyl-sn-glycero-3-phospho-(1D-myo-inositol 4-phosphate) + ATP = a 1,2-diacyl-sn-glycero-3-phospho-(1D-myo-inositol-4,5-bisphosphate) + ADP + H(+). Catalyzes the phosphorylation of phosphatidylinositol 4-phosphate on the fifth hydroxyl of the myo-inositol ring, to form phosphatidylinositol 4,5-bisphosphate. Involved, together with the calcineurin ppb1, in cytokinesis. The sequence is that of Phosphatidylinositol 4-phosphate 5-kinase its3 (its3) from Schizosaccharomyces pombe (strain 972 / ATCC 24843) (Fission yeast).